Consider the following 2184-residue polypeptide: Genome polyprotein (2184 aa).

Gly2 carries the N-myristoyl glycine; by host lipid modification. Over 2–1494 (GAQVSTQKTG…HVSRAFICLQ (1493 aa)) the chain is Cytoplasmic. Residues 566–582 (FYQSPVEGAIERAIARV) are amphipathic alpha-helix. Catalysis depends on for protease 2A activity residues His871 and Asp889. The Zn(2+) site is built by Cys906 and Cys908. Cys960 functions as the For protease 2A activity in the catalytic mechanism. Zn(2+) contacts are provided by Cys966 and His968. The membrane-binding stretch occupies residues 1100 to 1172 (SNGWLKKFTE…EQSAPSQSDQ (73 aa)). Residues 1100–1238 (SNGWLKKFTE…SPGAGKSVAT (139 aa)) are oligomerization. Residues 1121–1125 (AIKIQ) form an RNA-binding region. The 157-residue stretch at 1204-1360 (EKKMSNYIQF…SMYSQNGKIN (157 aa)) folds into the SF3 helicase domain. The Zn(2+) site is built by Cys1368, Cys1380, and Cys1385. The C4-type; degenerate zinc-finger motif lies at 1368-1385 (CDEECCPVNFKKCCPLVC). Residues 1412–1419 (EYNHRHSV) form an RNA-binding region. Residues 1423 to 1428 (LEALFQ) form an oligomerization region. An intramembrane segment occupies 1495 to 1510 (ALTTFVSVAGIIYIIY). The Cytoplasmic portion of the chain corresponds to 1511 to 2184 (KLFAGFQGAY…TLRRKWLDSF (674 aa)). At Tyr1520 the chain carries O-(5'-phospho-RNA)-tyrosine. Residues 1540–1718 (GPAFEFAVAM…FSAALLKHYF (179 aa)) enclose the Peptidase C3 domain. Active-site for protease 3C activity residues include His1579, Glu1610, and Cys1686. A RdRp catalytic domain is found at 1949-2065 (GHLIAFDYSG…SYPWPIDASL (117 aa)). Positions 1955 and 2051 each coordinate Mg(2+).

Belongs to the picornaviruses polyprotein family. Interacts with capsid protein VP1 and capsid protein VP3 to form heterotrimeric protomers. In terms of assembly, interacts with capsid protein VP0, and capsid protein VP3 to form heterotrimeric protomers. Five protomers subsequently associate to form pentamers which serve as building blocks for the capsid. Interacts with capsid protein VP2, capsid protein VP3 and capsid protein VP4 following cleavage of capsid protein VP0. Interacts with host CXADR. As to quaternary structure, interacts with capsid protein VP1 and capsid protein VP3 in the mature capsid. Interacts with capsid protein VP0 and capsid protein VP1 to form heterotrimeric protomers. Five protomers subsequently associate to form pentamers which serve as building blocks for the capsid. Interacts with capsid protein VP4 in the mature capsid. Interacts with protein 2C; this interaction may be important for virion morphogenesis. In terms of assembly, interacts with capsid protein VP1 and capsid protein VP3. As to quaternary structure, homodimer. Homohexamer; forms a hexameric ring structure with 6-fold symmetry characteristic of AAA+ ATPases. Interacts (via N-terminus) with host RTN3 (via reticulon domain); this interaction is important for viral replication. Interacts with capsid protein VP3; this interaction may be important for virion morphogenesis. In terms of assembly, interacts with protein 3CD. As to quaternary structure, homodimer. Interacts with host GBF1. Interacts (via GOLD domain) with host ACBD3 (via GOLD domain); this interaction allows the formation of a viral protein 3A/ACBD3 heterotetramer with a 2:2 stoichiometry, which will stimulate the recruitment of host PI4KB in order to synthesize PI4P at the viral RNA replication sites. Interacts with RNA-directed RNA polymerase. In terms of assembly, interacts with protein 3AB and with RNA-directed RNA polymerase. As to quaternary structure, interacts with Viral protein genome-linked and with protein 3CD. Mg(2+) is required as a cofactor. Post-translationally, specific enzymatic cleavages in vivo by the viral proteases yield processing intermediates and the mature proteins. Myristoylation is required for the formation of pentamers during virus assembly. Further assembly of 12 pentamers and a molecule of genomic RNA generates the provirion. In terms of processing, during virion maturation, immature virions are rendered infectious following cleavage of VP0 into VP4 and VP2. This maturation seems to be an autocatalytic event triggered by the presence of RNA in the capsid and it is followed by a conformational change infectious virion. Post-translationally, myristoylation is required during RNA encapsidation and formation of the mature virus particle. VPg is uridylylated by the polymerase into VPg-pUpU. This acts as a nucleotide-peptide primer for the genomic RNA replication.

The protein localises to the virion. It localises to the host cytoplasm. It is found in the host cytoplasmic vesicle membrane. The protein resides in the host nucleus. The catalysed reaction is a ribonucleoside 5'-triphosphate + H2O = a ribonucleoside 5'-diphosphate + phosphate + H(+). It catalyses the reaction Selective cleavage of Tyr-|-Gly bond in the picornavirus polyprotein.. The enzyme catalyses RNA(n) + a ribonucleoside 5'-triphosphate = RNA(n+1) + diphosphate. It carries out the reaction Selective cleavage of Gln-|-Gly bond in the poliovirus polyprotein. In other picornavirus reactions Glu may be substituted for Gln, and Ser or Thr for Gly.. With respect to regulation, replication or transcription is subject to high level of random mutations by the nucleotide analog ribavirin. In terms of biological role, forms an icosahedral capsid of pseudo T=3 symmetry with capsid proteins VP2 and VP3. The capsid is 300 Angstroms in diameter, composed of 60 copies of each capsid protein and enclosing the viral positive strand RNA genome. Capsid protein VP1 mainly forms the vertices of the capsid. Capsid protein VP1 interacts with host CXADR to provide virion attachment to target host cells. This attachment induces virion internalization. Tyrosine kinases are probably involved in the entry process. After binding to its receptor, the capsid undergoes conformational changes. Capsid protein VP1 N-terminus (that contains an amphipathic alpha-helix) and capsid protein VP4 are externalized. Together, they shape a pore in the host membrane through which viral genome is translocated to host cell cytoplasm. Forms an icosahedral capsid of pseudo T=3 symmetry with capsid proteins VP2 and VP3. The capsid is 300 Angstroms in diameter, composed of 60 copies of each capsid protein and enclosing the viral positive strand RNA genome. Functionally, lies on the inner surface of the capsid shell. After binding to the host receptor, the capsid undergoes conformational changes. Capsid protein VP4 is released, Capsid protein VP1 N-terminus is externalized, and together, they shape a pore in the host membrane through which the viral genome is translocated into the host cell cytoplasm. Its function is as follows. Component of immature procapsids, which is cleaved into capsid proteins VP4 and VP2 after maturation. Allows the capsid to remain inactive before the maturation step. In terms of biological role, cysteine protease that cleaves viral polyprotein and specific host proteins. It is responsible for the autocatalytic cleavage between the P1 and P2 regions, which is the first cleavage occurring in the polyprotein. Also cleaves the host translation initiation factor EIF4G1, in order to shut down the capped cellular mRNA translation. Inhibits the host nucleus-cytoplasm protein and RNA trafficking by cleaving host members of the nuclear pores. Counteracts stress granule formation probably by antagonizing its assembly or promoting its dissassembly. Cleaves and inhibits host IFIH1/MDA5, thereby inhibiting the type-I IFN production and the establishment of the antiviral state. Cleaves and inhibits host MAVS, thereby inhibiting the type-I IFN production and the establishment of the antiviral state. Plays an essential role in the virus replication cycle by acting as a viroporin. Creates a pore in the host endoplasmic reticulum and as a consequence releases Ca2+ in the cytoplasm of infected cell. In turn, high levels of cytoplasmic calcium may trigger membrane trafficking and transport of viral ER-associated proteins to viroplasms, sites of viral genome replication. Functionally, induces and associates with structural rearrangements of intracellular membranes. Displays RNA-binding, nucleotide binding and NTPase activities. May play a role in virion morphogenesis and viral RNA encapsidation by interacting with the capsid protein VP3. Its function is as follows. Localizes the viral replication complex to the surface of membranous vesicles. Together with protein 3CD binds the Cis-Active RNA Element (CRE) which is involved in RNA synthesis initiation. Acts as a cofactor to stimulate the activity of 3D polymerase, maybe through a nucleid acid chaperone activity. In terms of biological role, localizes the viral replication complex to the surface of membranous vesicles. It inhibits host cell endoplasmic reticulum-to-Golgi apparatus transport and causes the disassembly of the Golgi complex, possibly through GBF1 interaction. This would result in depletion of MHC, trail receptors and IFN receptors at the host cell surface. Plays an essential role in viral RNA replication by recruiting ACBD3 and PI4KB at the viral replication sites, thereby allowing the formation of the rearranged membranous structures where viral replication takes place. Acts as a primer for viral RNA replication and remains covalently bound to viral genomic RNA. VPg is uridylylated prior to priming replication into VPg-pUpU. The oriI viral genomic sequence may act as a template for this. The VPg-pUpU is then used as primer on the genomic RNA poly(A) by the RNA-dependent RNA polymerase to replicate the viral genome. During genome replication, the VPg-RNA linkage is removed by the host TDP2, thereby accelerating replication. During the late stage of the replication cycle, host TDP2 is excluded from sites of viral RNA synthesis and encapsidation, allowing for the generation of progeny virions. Functionally, involved in the viral replication complex and viral polypeptide maturation. It exhibits protease activity with a specificity and catalytic efficiency that is different from protease 3C. Protein 3CD lacks polymerase activity. Protein 3CD binds to the 5'UTR of the viral genome. Its function is as follows. Replicates the viral genomic RNA on the surface of intracellular membranes. May form linear arrays of subunits that propagate along a strong head-to-tail interaction called interface-I. Covalently attaches UMP to a tyrosine of VPg, which is used to prime RNA synthesis. The positive stranded RNA genome is first replicated at virus induced membranous vesicles, creating a dsRNA genomic replication form. This dsRNA is then used as template to synthesize positive stranded RNA genomes. ss(+)RNA genomes are either translated, replicated or encapsidated. In terms of biological role, major viral protease that mediates proteolytic processing of the polyprotein. Cleaves host EIF5B, contributing to host translation shutoff. Also cleaves host PABPC1, contributing to host translation shutoff. Cleaves host NLRP1, triggers host N-glycine-mediated degradation of the autoinhibitory NLRP1 N-terminal fragment. In Coxsackievirus B6 (strain Schmitt), this protein is Genome polyprotein.